Reading from the N-terminus, the 333-residue chain is Fatty acid hydroxylase domain-containing protein 2 (333 aa).

The next 6 helical transmembrane spans lie at 29–49 (FILG…TWHL), 77–97 (ILFF…FNGL), 134–154 (TVLF…YPFL), 168–188 (FHWF…LFYY), 215–235 (VISL…PAIV), and 237–257 (PLVM…ALII). In terms of domain architecture, Fatty acid hydroxylase spans 176–299 (AIFTLIEEVL…LGVLDHLHGT (124 aa)).

Belongs to the sterol desaturase family.

Its subcellular location is the cytoplasm. The protein localises to the membrane. Functionally, promotes megakaryocyte differentiation by enhancing ERK phosphorylation and up-regulating RUNX1 expression. This chain is Fatty acid hydroxylase domain-containing protein 2 (FAXDC2), found in Macaca fascicularis (Crab-eating macaque).